The following is a 226-amino-acid chain: Phosphoglycolate phosphatase (226 aa).

Catalysis depends on D9, which acts as the Nucleophile. Mg(2+) contacts are provided by D9 and D11. Position 150 (K150) interacts with substrate. D173 and D177 together coordinate Mg(2+).

Belongs to the archaeal SPP-like hydrolase family. Requires Mg(2+) as cofactor.

It catalyses the reaction 2-phosphoglycolate + H2O = glycolate + phosphate. Catalyzes the dephosphorylation of 2-phosphoglycolate. The protein is Phosphoglycolate phosphatase of Methanosarcina mazei (strain ATCC BAA-159 / DSM 3647 / Goe1 / Go1 / JCM 11833 / OCM 88) (Methanosarcina frisia).